Consider the following 306-residue polypeptide: UDP-3-O-acyl-N-acetylglucosamine deacetylase (306 aa).

Residues His-79, His-239, and Asp-243 each contribute to the Zn(2+) site. His-266 acts as the Proton donor in catalysis.

It belongs to the LpxC family. Zn(2+) serves as cofactor.

It carries out the reaction a UDP-3-O-[(3R)-3-hydroxyacyl]-N-acetyl-alpha-D-glucosamine + H2O = a UDP-3-O-[(3R)-3-hydroxyacyl]-alpha-D-glucosamine + acetate. It participates in glycolipid biosynthesis; lipid IV(A) biosynthesis; lipid IV(A) from (3R)-3-hydroxytetradecanoyl-[acyl-carrier-protein] and UDP-N-acetyl-alpha-D-glucosamine: step 2/6. Functionally, catalyzes the hydrolysis of UDP-3-O-myristoyl-N-acetylglucosamine to form UDP-3-O-myristoylglucosamine and acetate, the committed step in lipid A biosynthesis. The sequence is that of UDP-3-O-acyl-N-acetylglucosamine deacetylase from Glaesserella parasuis serovar 5 (strain SH0165) (Haemophilus parasuis).